A 323-amino-acid chain; its full sequence is Ribonuclease Z (323 aa).

Positions 62, 64, 66, 67, 140, 211, and 270 each coordinate Zn(2+). The Proton acceptor role is filled by Asp66.

This sequence belongs to the RNase Z family. In terms of assembly, homodimer. Requires Zn(2+) as cofactor.

The catalysed reaction is Endonucleolytic cleavage of RNA, removing extra 3' nucleotides from tRNA precursor, generating 3' termini of tRNAs. A 3'-hydroxy group is left at the tRNA terminus and a 5'-phosphoryl group is left at the trailer molecule.. Functionally, zinc phosphodiesterase, which displays some tRNA 3'-processing endonuclease activity. Probably involved in tRNA maturation, by removing a 3'-trailer from precursor tRNA. This is Ribonuclease Z from Marinobacter nauticus (strain ATCC 700491 / DSM 11845 / VT8) (Marinobacter aquaeolei).